Here is a 529-residue protein sequence, read N- to C-terminus: DEP domain-containing protein 1B (529 aa).

The region spanning 24-108 (FRAKMPLRKH…DNRHLYRFPP (85 aa)) is the DEP domain. A Phosphoserine modification is found at Ser-160. The 193-residue stretch at 201 to 393 (DSLEEVLDVK…FLMDNYQEIL (193 aa)) folds into the Rho-GAP domain. Ser-436 carries the phosphoserine modification.

This chain is DEP domain-containing protein 1B (DEPDC1B), found in Homo sapiens (Human).